The sequence spans 589 residues: Putative phospholipase B-like 2 (589 aa).

The signal sequence occupies residues 1–41 (MVAPMYGSPGGRLARAVTRALALALVLALLVGLFLSGLTGA). Asn88 and Asn110 each carry an N-linked (GlcNAc...) asparagine glycan. Cys142 and Cys152 are joined by a disulfide. N-linked (GlcNAc...) asparagine glycosylation is found at Asn174, Asn231, Asn436, and Asn465. An intrachain disulfide couples Cys492 to Cys495. Asn515 carries N-linked (GlcNAc...) asparagine glycosylation.

It belongs to the phospholipase B-like family. In terms of assembly, interacts with IGF2R. In terms of processing, glycosylated; contains mannose 6-phosphate sugars.

It localises to the lysosome lumen. Its function is as follows. Putative phospholipase. The polypeptide is Putative phospholipase B-like 2 (PLBD2) (Bos taurus (Bovine)).